The sequence spans 244 residues: Flavin-dependent thymidylate synthase (244 aa).

The region spanning 17 to 239 (ITVELVKHSA…PETHAAFEKQ (223 aa)) is the ThyX domain. FAD-binding positions include Ser68, 91–93 (RHR), and Glu99. DUMP-binding positions include 88–91 (EFMR), 99–103 (EESGR), and Arg171. The ThyX motif signature appears at 91–101 (RHRIASYNEES). Residues 187–189 (NAR) and Asn193 contribute to the FAD site. Residue Arg198 coordinates dUMP. Catalysis depends on Arg198, which acts as the Involved in ionization of N3 of dUMP, leading to its activation.

Belongs to the thymidylate synthase ThyX family. In terms of assembly, homotetramer. It depends on FAD as a cofactor.

It carries out the reaction dUMP + (6R)-5,10-methylene-5,6,7,8-tetrahydrofolate + NADPH + H(+) = dTMP + (6S)-5,6,7,8-tetrahydrofolate + NADP(+). It participates in pyrimidine metabolism; dTTP biosynthesis. In terms of biological role, catalyzes the reductive methylation of 2'-deoxyuridine-5'-monophosphate (dUMP) to 2'-deoxythymidine-5'-monophosphate (dTMP) while utilizing 5,10-methylenetetrahydrofolate (mTHF) as the methyl donor, and NADPH and FADH(2) as the reductant. This Tropheryma whipplei (strain Twist) (Whipple's bacillus) protein is Flavin-dependent thymidylate synthase.